The sequence spans 281 residues: UPF0273 protein PAE3143 (281 aa).

In terms of domain architecture, KaiC spans Pro4 to Arg248. Gly31 to Ser38 provides a ligand contact to ATP.

Belongs to the UPF0273 family.

The polypeptide is UPF0273 protein PAE3143 (Pyrobaculum aerophilum (strain ATCC 51768 / DSM 7523 / JCM 9630 / CIP 104966 / NBRC 100827 / IM2)).